The following is a 115-amino-acid chain: NADH-ubiquinone oxidoreductase chain 3 (115 aa).

3 helical membrane-spanning segments follow: residues 3-23 (VMLT…IAFW), 55-75 (FFLV…LLPL), and 84-104 (LTTM…SLAY).

It belongs to the complex I subunit 3 family. As to quaternary structure, core subunit of respiratory chain NADH dehydrogenase (Complex I) which is composed of 45 different subunits. Interacts with TMEM186. Interacts with TMEM242.

The protein localises to the mitochondrion inner membrane. The enzyme catalyses a ubiquinone + NADH + 5 H(+)(in) = a ubiquinol + NAD(+) + 4 H(+)(out). Core subunit of the mitochondrial membrane respiratory chain NADH dehydrogenase (Complex I) which catalyzes electron transfer from NADH through the respiratory chain, using ubiquinone as an electron acceptor. Essential for the catalytic activity of complex I. This is NADH-ubiquinone oxidoreductase chain 3 from Canis lupus familiaris (Dog).